The sequence spans 417 residues: UDP-N-acetylglucosamine 1-carboxyvinyltransferase (417 aa).

Phosphoenolpyruvate is bound at residue 22–23 (KN). Arg-92 is a UDP-N-acetyl-alpha-D-glucosamine binding site. Cys-116 functions as the Proton donor in the catalytic mechanism. Cys-116 is subject to 2-(S-cysteinyl)pyruvic acid O-phosphothioketal. Residues 121–125 (RPIDL), Asp-306, and Ile-328 each bind UDP-N-acetyl-alpha-D-glucosamine.

It belongs to the EPSP synthase family. MurA subfamily.

The protein resides in the cytoplasm. It carries out the reaction phosphoenolpyruvate + UDP-N-acetyl-alpha-D-glucosamine = UDP-N-acetyl-3-O-(1-carboxyvinyl)-alpha-D-glucosamine + phosphate. The protein operates within cell wall biogenesis; peptidoglycan biosynthesis. In terms of biological role, cell wall formation. Adds enolpyruvyl to UDP-N-acetylglucosamine. The sequence is that of UDP-N-acetylglucosamine 1-carboxyvinyltransferase from Buchnera aphidicola subsp. Schizaphis graminum (strain Sg).